A 374-amino-acid polypeptide reads, in one-letter code: Serine/threonine-protein kinase-transforming protein mos (374 aa).

Positions 94 to 370 (VCLMHRLGSG…LLQRDLKAFR (277 aa)) constitute a Protein kinase domain. ATP is bound by residues 100-108 (LGSGGFGSV) and lysine 121. Aspartate 229 (proton acceptor) is an active-site residue.

Belongs to the protein kinase superfamily. Ser/Thr protein kinase family.

It carries out the reaction L-seryl-[protein] + ATP = O-phospho-L-seryl-[protein] + ADP + H(+). It catalyses the reaction L-threonyl-[protein] + ATP = O-phospho-L-threonyl-[protein] + ADP + H(+). The polypeptide is Serine/threonine-protein kinase-transforming protein mos (V-MOS) (Mus musculus (Mouse)).